Consider the following 245-residue polypeptide: MIIPALDLIDGTVVRLHQGDYGKQRDYGNDPLPRLQDYAAQGAEVLHLVDLTGAKDPAKRQIPLIKTLVAGVNVPVQVGGGVRSEEDVAALLEAGVARVVVGSTAVKSPEMVKGWFERFGTDALVLALDVRIDEQGNKQVAVSGWQENSGVSLEQLVETYLPVGLKHVLCTDISRDGTLAGSNVSLYEEVCARYPQVAFQSSGGIGDIDDVAALRGTGVRGVIVGRALLEGKFTVKEAIACWQNA.

D7 acts as the Proton acceptor in catalysis. Catalysis depends on D129, which acts as the Proton donor.

It belongs to the HisA/HisF family.

The protein localises to the cytoplasm. It catalyses the reaction 1-(5-phospho-beta-D-ribosyl)-5-[(5-phospho-beta-D-ribosylamino)methylideneamino]imidazole-4-carboxamide = 5-[(5-phospho-1-deoxy-D-ribulos-1-ylimino)methylamino]-1-(5-phospho-beta-D-ribosyl)imidazole-4-carboxamide. Its pathway is amino-acid biosynthesis; L-histidine biosynthesis; L-histidine from 5-phospho-alpha-D-ribose 1-diphosphate: step 4/9. The chain is 1-(5-phosphoribosyl)-5-[(5-phosphoribosylamino)methylideneamino] imidazole-4-carboxamide isomerase from Escherichia coli O81 (strain ED1a).